The sequence spans 476 residues: Aspartyl/glutamyl-tRNA(Asn/Gln) amidotransferase subunit B (476 aa).

Belongs to the GatB/GatE family. GatB subfamily. In terms of assembly, heterotrimer of A, B and C subunits.

The catalysed reaction is L-glutamyl-tRNA(Gln) + L-glutamine + ATP + H2O = L-glutaminyl-tRNA(Gln) + L-glutamate + ADP + phosphate + H(+). It carries out the reaction L-aspartyl-tRNA(Asn) + L-glutamine + ATP + H2O = L-asparaginyl-tRNA(Asn) + L-glutamate + ADP + phosphate + 2 H(+). Functionally, allows the formation of correctly charged Asn-tRNA(Asn) or Gln-tRNA(Gln) through the transamidation of misacylated Asp-tRNA(Asn) or Glu-tRNA(Gln) in organisms which lack either or both of asparaginyl-tRNA or glutaminyl-tRNA synthetases. The reaction takes place in the presence of glutamine and ATP through an activated phospho-Asp-tRNA(Asn) or phospho-Glu-tRNA(Gln). This chain is Aspartyl/glutamyl-tRNA(Asn/Gln) amidotransferase subunit B, found in Clostridium botulinum (strain Kyoto / Type A2).